The chain runs to 753 residues: 5-methyltetrahydropteroyltriglutamate--homocysteine methyltransferase (753 aa).

Residues 17-20 (RELK) and lysine 117 each bind 5-methyltetrahydropteroyltri-L-glutamate. L-homocysteine-binding positions include 431-433 (IGS) and glutamate 484. L-methionine is bound by residues 431–433 (IGS) and glutamate 484. 5-methyltetrahydropteroyltri-L-glutamate is bound by residues 515-516 (RC) and tryptophan 561. Residue aspartate 599 participates in L-homocysteine binding. Residue aspartate 599 participates in L-methionine binding. Glutamate 605 is a 5-methyltetrahydropteroyltri-L-glutamate binding site. Histidine 641, cysteine 643, and glutamate 665 together coordinate Zn(2+). Histidine 694 acts as the Proton donor in catalysis. Residue cysteine 726 participates in Zn(2+) binding.

Belongs to the vitamin-B12 independent methionine synthase family. The cofactor is Zn(2+).

It carries out the reaction 5-methyltetrahydropteroyltri-L-glutamate + L-homocysteine = tetrahydropteroyltri-L-glutamate + L-methionine. Its pathway is amino-acid biosynthesis; L-methionine biosynthesis via de novo pathway; L-methionine from L-homocysteine (MetE route): step 1/1. Functionally, catalyzes the transfer of a methyl group from 5-methyltetrahydrofolate to homocysteine resulting in methionine formation. The chain is 5-methyltetrahydropteroyltriglutamate--homocysteine methyltransferase from Escherichia coli O6:H1 (strain CFT073 / ATCC 700928 / UPEC).